The primary structure comprises 423 residues: GTPase Obg (423 aa).

The Obg domain occupies 1-158 (MFIDTARIYI…MWVRLELKLL (158 aa)). The OBG-type G domain maps to 159-329 (ADVGLIGFPN…LLDKTIEILS (171 aa)). Residues 165 to 172 (GFPNAGKS), 190 to 194 (FTTLT), 211 to 214 (DIPG), 281 to 284 (NKID), and 310 to 312 (SAL) each bind GTP. Positions 172 and 192 each coordinate Mg(2+). The region spanning 346 to 423 (TPPEEEETLN…VRDFEFEYYE (78 aa)) is the OCT domain.

Belongs to the TRAFAC class OBG-HflX-like GTPase superfamily. OBG GTPase family. Monomer. It depends on Mg(2+) as a cofactor.

It localises to the cytoplasm. Functionally, an essential GTPase which binds GTP, GDP and possibly (p)ppGpp with moderate affinity, with high nucleotide exchange rates and a fairly low GTP hydrolysis rate. Plays a role in control of the cell cycle, stress response, ribosome biogenesis and in those bacteria that undergo differentiation, in morphogenesis control. This is GTPase Obg from Thermoanaerobacter pseudethanolicus (strain ATCC 33223 / 39E) (Clostridium thermohydrosulfuricum).